The chain runs to 192 residues: MNYQIKRNTEETQLNISLANNGTQSHINTGVGFLDHMLTLFTFHSGLTLSIEATGDTYVDDHHITEDIGIVIGQLLLELIKTQQSFTRYGCSYVPMDEALARTVVDISGRPYFSFNSKLSAQKVGTFDTELVEEFFRALIINARLTVHIDLLRGGNTHHEIEAIFKSFARALKISLAQNEDGRIPSSKGVIE.

The protein belongs to the imidazoleglycerol-phosphate dehydratase family.

Its subcellular location is the cytoplasm. It catalyses the reaction D-erythro-1-(imidazol-4-yl)glycerol 3-phosphate = 3-(imidazol-4-yl)-2-oxopropyl phosphate + H2O. Its pathway is amino-acid biosynthesis; L-histidine biosynthesis; L-histidine from 5-phospho-alpha-D-ribose 1-diphosphate: step 6/9. The protein is Imidazoleglycerol-phosphate dehydratase of Staphylococcus epidermidis (strain ATCC 35984 / DSM 28319 / BCRC 17069 / CCUG 31568 / BM 3577 / RP62A).